The following is a 248-amino-acid chain: 2,3-bisphosphoglycerate-dependent phosphoglycerate mutase (248 aa).

Substrate-binding positions include 8-15 (RHGESTWN), 21-22 (TG), Arg60, 87-90 (ERHY), Lys98, and 114-115 (RR). His9 functions as the Tele-phosphohistidine intermediate in the catalytic mechanism. Glu87 functions as the Proton donor/acceptor in the catalytic mechanism. The segment at 118-137 (DTPPPALEPTDPRASYDDPR) is disordered. A compositionally biased stretch (basic and acidic residues) spans 127 to 137 (TDPRASYDDPR). A substrate-binding site is contributed by 183-184 (GN).

Belongs to the phosphoglycerate mutase family. BPG-dependent PGAM subfamily. In terms of assembly, homodimer.

It catalyses the reaction (2R)-2-phosphoglycerate = (2R)-3-phosphoglycerate. The protein operates within carbohydrate degradation; glycolysis; pyruvate from D-glyceraldehyde 3-phosphate: step 3/5. Catalyzes the interconversion of 2-phosphoglycerate and 3-phosphoglycerate. The chain is 2,3-bisphosphoglycerate-dependent phosphoglycerate mutase from Cupriavidus necator (strain ATCC 17699 / DSM 428 / KCTC 22496 / NCIMB 10442 / H16 / Stanier 337) (Ralstonia eutropha).